We begin with the raw amino-acid sequence, 349 residues long: EFTSSTGDTVMIDEGALVEGTIDEDAVGAFGGEIVDTIVKQYGETRARVFINEVASLAMRAIMHFGFSIGIDDESISDAAEAQIDESMDNAYERVQELIDTYENDDLESLPGRTVDETLEMKIMQTLGKARDSAGDIADEHFDDDNPAVIMAESGARGSMLNLTQMAACVGQQAVRGERINRGYEGRTLSHFKPGDLSAEAHGFVEDSYRSGLTPREFFFHAMGGREGLVDTAVRTSKSGYLQRRLINALSELETQYDGTVRDTSDNIVQFEFGEDNTSPVKVSSSDDNEIDVDEIADRVLAAEFEDEGEEFAGEQATNLSESADDRMDRDRPSSHGAAPIDVPEVGDD.

The segment at glutamate 306–aspartate 349 is disordered. The span at alanine 324 to serine 334 shows a compositional bias: basic and acidic residues.

It belongs to the RNA polymerase beta' chain family. In terms of assembly, part of the RNA polymerase complex.

The protein localises to the cytoplasm. The catalysed reaction is RNA(n) + a ribonucleoside 5'-triphosphate = RNA(n+1) + diphosphate. Functionally, DNA-dependent RNA polymerase (RNAP) catalyzes the transcription of DNA into RNA using the four ribonucleoside triphosphates as substrates. Forms the clamp head domain. In Halococcus morrhuae (Micrococcus morrhuae), this protein is DNA-directed RNA polymerase subunit Rpo1N.